Here is a 109-residue protein sequence, read N- to C-terminus: Nucleoid-associated protein MADE_1013280 (109 aa).

The tract at residues 86–109 is disordered; the sequence is TSKEKMGDVTGGMPLPPGFKMPGF. The segment covering 99–109 has biased composition (pro residues); it reads PLPPGFKMPGF.

Belongs to the YbaB/EbfC family. In terms of assembly, homodimer.

Its subcellular location is the cytoplasm. It is found in the nucleoid. Functionally, binds to DNA and alters its conformation. May be involved in regulation of gene expression, nucleoid organization and DNA protection. This Alteromonas mediterranea (strain DSM 17117 / CIP 110805 / LMG 28347 / Deep ecotype) protein is Nucleoid-associated protein MADE_1013280.